The sequence spans 457 residues: MESKNKLKRGLSTRHIRFMALGSAIGTGLFYGSADAIKMAGPSVLLAYIIGGIAAYIIMRALGEMSVHNPAASSFSRYAQENLGPLAGYITGWTYCFEILIVAIADVTAFGIYMGVWFPTVPHWIWVLSVVLIICAVNLMSVKVFGELEFWFSFFKVATIIIMIVAGFGIIIWGIGNGGQPTGIHNLWSNGGFFSNGWLGMVMSLQMVMFAYGGIEIIGITAGEAKDPEKSIPRAINSVPMRILVFYVGTLFVIMSIYPWNQVGTAGSPFVLTFQHMGITFAASILNFVVLTASLSAINSDVFGVGRMLHGMAEQGSAPKIFSKTSRRGIPWVTVLVMTTALLFAVYLNYIMPENVFLVIASLATFATVWVWIMILLSQIAFRRRLPPEEVKALKFKVPGGVATTIGGLIFLLFIIGLIGYHPDTRISLYVGFAWIVVLLIGWMFKRRHDRQLAENQ.

Over 1-17 (MESKNKLKRGLSTRHIR) the chain is Cytoplasmic. 2 helical membrane-spanning segments follow: residues 18–38 (FMAL…DAIK) and 39–59 (MAGP…YIIM). The Cytoplasmic portion of the chain corresponds to 60–84 (RALGEMSVHNPAASSFSRYAQENLG). Residues 85-105 (PLAGYITGWTYCFEILIVAIA) traverse the membrane as a helical segment. Topologically, residues 106–113 (DVTAFGIY) are periplasmic. Residues 114–134 (MGVWFPTVPHWIWVLSVVLII) traverse the membrane as a helical segment. The Cytoplasmic portion of the chain corresponds to 135–156 (CAVNLMSVKVFGELEFWFSFFK). Residues 157-177 (VATIIIMIVAGFGIIIWGIGN) form a helical membrane-spanning segment. Residues 178–197 (GGQPTGIHNLWSNGGFFSNG) are Periplasmic-facing. Residues 198-218 (WLGMVMSLQMVMFAYGGIEII) traverse the membrane as a helical segment. Topologically, residues 219–242 (GITAGEAKDPEKSIPRAINSVPMR) are cytoplasmic. A helical membrane pass occupies residues 243–263 (ILVFYVGTLFVIMSIYPWNQV). Residues 264–277 (GTAGSPFVLTFQHM) are Periplasmic-facing. A helical membrane pass occupies residues 278-298 (GITFAASILNFVVLTASLSAI). The Cytoplasmic segment spans residues 299-331 (NSDVFGVGRMLHGMAEQGSAPKIFSKTSRRGIP). Residues 332–352 (WVTVLVMTTALLFAVYLNYIM) form a helical membrane-spanning segment. Residues 353–355 (PEN) are Periplasmic-facing. The chain crosses the membrane as a helical span at residues 356–376 (VFLVIASLATFATVWVWIMIL). Topologically, residues 377–399 (LSQIAFRRRLPPEEVKALKFKVP) are cytoplasmic. Residues 400–420 (GGVATTIGGLIFLLFIIGLIG) traverse the membrane as a helical segment. The Periplasmic segment spans residues 421-424 (YHPD). A helical membrane pass occupies residues 425 to 445 (TRISLYVGFAWIVVLLIGWMF). Over 446 to 457 (KRRHDRQLAENQ) the chain is Cytoplasmic.

It belongs to the amino acid-polyamine-organocation (APC) superfamily. Amino acid transporter (AAT) (TC 2.A.3.1) family.

It is found in the cell inner membrane. In terms of biological role, permease that is involved in the transport across the cytoplasmic membrane of proline. The sequence is that of Proline-specific permease ProY (proY) from Escherichia coli O157:H7.